A 402-amino-acid polypeptide reads, in one-letter code: Tryptophan synthase beta chain (402 aa).

At K88 the chain carries N6-(pyridoxal phosphate)lysine.

Belongs to the TrpB family. Tetramer of two alpha and two beta chains. Requires pyridoxal 5'-phosphate as cofactor.

It carries out the reaction (1S,2R)-1-C-(indol-3-yl)glycerol 3-phosphate + L-serine = D-glyceraldehyde 3-phosphate + L-tryptophan + H2O. It participates in amino-acid biosynthesis; L-tryptophan biosynthesis; L-tryptophan from chorismate: step 5/5. Functionally, the beta subunit is responsible for the synthesis of L-tryptophan from indole and L-serine. This chain is Tryptophan synthase beta chain (trpB), found in Pasteurella multocida (strain Pm70).